The primary structure comprises 188 residues: GMP synthase [glutamine-hydrolyzing] subunit A (188 aa).

The region spanning Met1–Leu188 is the Glutamine amidotransferase type-1 domain. The active-site Nucleophile is the Cys78. Residues His165 and Glu167 contribute to the active site.

Heterodimer composed of a glutamine amidotransferase subunit (A) and a GMP-binding subunit (B).

The catalysed reaction is XMP + L-glutamine + ATP + H2O = GMP + L-glutamate + AMP + diphosphate + 2 H(+). It functions in the pathway purine metabolism; GMP biosynthesis; GMP from XMP (L-Gln route): step 1/1. Functionally, catalyzes the synthesis of GMP from XMP. The protein is GMP synthase [glutamine-hydrolyzing] subunit A of Pyrococcus furiosus (strain ATCC 43587 / DSM 3638 / JCM 8422 / Vc1).